The primary structure comprises 218 residues: Glutathione S-transferase Mu 1 (218 aa).

Residues 2-88 (PMILGYWNVR…YLARKHHLCG (87 aa)) enclose the GST N-terminal domain. Glutathione-binding positions include 7–8 (YW), 43–46 (RSQW), lysine 50, and 59–60 (NL). Position 67 is a phosphoserine (serine 67). 72-73 (QS) lines the glutathione pocket. Positions 90-208 (TEEERIRADI…KSSRYLSTPI (119 aa)) constitute a GST C-terminal domain. Tyrosine 116 is a binding site for substrate. A phosphoserine mark is found at serine 205 and serine 210.

The protein belongs to the GST superfamily. Mu family. As to quaternary structure, homodimer or heterodimer.

The protein resides in the cytoplasm. The enzyme catalyses RX + glutathione = an S-substituted glutathione + a halide anion + H(+). It carries out the reaction prostaglandin A2 + glutathione = prostaglandin A2-S-(R)-glutathione. It catalyses the reaction prostaglandin J2 + glutathione = prostaglandin J2-S-(R)-glutathione. The catalysed reaction is prostaglandin J2 + glutathione = prostaglandin J2-S-(S)-glutathione. The enzyme catalyses prostaglandin A2 + glutathione = prostaglandin A2-S-(S)-glutathione. It carries out the reaction 11(S)-hydroxy-14(S),15(S)-epoxy-(5Z,8Z,12E)-eicosatrienoate + glutathione = (11S,15S)-dihydroxy-14(R)-S-glutathionyl-(5Z,8Z,12E)-eicosatrienoate. Its function is as follows. Conjugation of reduced glutathione to a wide number of exogenous and endogenous hydrophobic electrophiles. The olfactory GST may be crucial for the acuity of the olfactory process. Participates in the formation of novel hepoxilin regioisomers. This chain is Glutathione S-transferase Mu 1, found in Rattus norvegicus (Rat).